A 532-amino-acid polypeptide reads, in one-letter code: uncharacterized protein (532 aa).

The next 6 membrane-spanning stretches (helical) occupy residues 7–26, 30–52, 59–77, 87–109, 116–134, and 139–161; these read HSSY…LGRI, GLSL…GVII, FGLV…PGFF, LILI…KYAF, VVGL…AVAI, and SPLA…ILFV. 2 consecutive RCK C-terminal domains span residues 179-262 and 263-346; these read LEIE…LIGE and REEG…LLGN. Helical transmembrane passes span 356 to 376, 386 to 408, 421 to 440, 445 to 467, 474 to 496, and 506 to 528; these read FFPI…NISF, LTGG…PIIW, LGLL…NLVA, SGLL…AVIV, INIL…LAAA, and SVAY…QVIS.

This sequence belongs to the AAE transporter (TC 2.A.81) family.

It is found in the cell membrane. This is an uncharacterized protein from Bacteroides thetaiotaomicron (strain ATCC 29148 / DSM 2079 / JCM 5827 / CCUG 10774 / NCTC 10582 / VPI-5482 / E50).